Reading from the N-terminus, the 312-residue chain is Aspartoacylase (312 aa).

Positions 20 and 23 each coordinate Zn(2+). N-acetyl-L-aspartate-binding residues include Arg62, Asn69, and Arg70. His115 contacts Zn(2+). The N-acetyl-L-aspartate site is built by Tyr163 and Arg167. Residue Glu177 is the Proton donor/acceptor of the active site. Tyr287 provides a ligand contact to N-acetyl-L-aspartate.

The protein belongs to the AspA/AstE family. Aspartoacylase subfamily. Homodimer. Zn(2+) serves as cofactor. In terms of tissue distribution, detected in kidney proximal tubule cells (at protein level).

Its subcellular location is the cytoplasm. It is found in the nucleus. The enzyme catalyses an N-acyl-L-aspartate + H2O = a carboxylate + L-aspartate. The catalysed reaction is N-acetyl-L-aspartate + H2O = L-aspartate + acetate. In terms of biological role, catalyzes the deacetylation of N-acetylaspartic acid (NAA) to produce acetate and L-aspartate. NAA occurs in high concentration in brain and its hydrolysis NAA plays a significant part in the maintenance of intact white matter. In other tissues it acts as a scavenger of NAA from body fluids. The polypeptide is Aspartoacylase (Rattus norvegicus (Rat)).